We begin with the raw amino-acid sequence, 867 residues long: Mitochondrial escape protein 2 (867 aa).

2 disordered regions span residues 1–20 (MISAHILSRQATRPGHRGPR) and 44–66 (RTTRAWESTSSSTASTGSHKESG). A mitochondrion-targeting transit peptide spans 1-41 (MISAHILSRQATRPGHRGPRFTTHSTALLVQRSLGQGLPLA). At 42-308 (HRRTTRAWES…IWAWFTSHPR (267 aa)) the chain is on the mitochondrial matrix side. Low complexity predominate over residues 48–59 (AWESTSSSTAST). The RRM domain maps to 203–293 (SRIRVEFVAA…TKLRLSYEQR (91 aa)). A helical membrane pass occupies residues 309 to 329 (IVIPLVAALIAAFTVAVFDPI). The Mitochondrial intermembrane segment spans residues 330-867 (REFFVKAHVQ…GVVKGQMVKG (538 aa)). The span at 614 to 639 (FAHDGQQKDSESGDQDNDNKNQKKDS) shows a compositional bias: basic and acidic residues. Residues 614-647 (FAHDGQQKDSESGDQDNDNKNQKKDSNTPAPLDP) are disordered. A coiled-coil region spans residues 797-857 (LLVLTELAKM…ARLKGLEKEM (61 aa)).

It belongs to the YME2 family.

The protein resides in the mitochondrion inner membrane. In terms of biological role, plays a role in maintaining the mitochondrial genome and in controlling the mtDNA escape. Involved in the regulation of mtDNA nucleotide structure and number. May have a dispensable role in early maturation of pre-rRNA. This chain is Mitochondrial escape protein 2 (msp-45), found in Neurospora crassa (strain ATCC 24698 / 74-OR23-1A / CBS 708.71 / DSM 1257 / FGSC 987).